The following is a 178-amino-acid chain: Large ribosomal subunit protein uL6 (178 aa).

It belongs to the universal ribosomal protein uL6 family. In terms of assembly, part of the 50S ribosomal subunit.

Functionally, this protein binds to the 23S rRNA, and is important in its secondary structure. It is located near the subunit interface in the base of the L7/L12 stalk, and near the tRNA binding site of the peptidyltransferase center. The chain is Large ribosomal subunit protein uL6 from Enterococcus faecalis (strain ATCC 700802 / V583).